We begin with the raw amino-acid sequence, 281 residues long: uncharacterized protein (281 aa).

4 helical membrane passes run A8 to S28, L97 to G117, P147 to V167, and I210 to A230.

This sequence to S.pombe bem46 and yeast YNL320w.

Its subcellular location is the cell membrane. This is an uncharacterized protein from Mycobacterium tuberculosis (strain CDC 1551 / Oshkosh).